The sequence spans 1068 residues: Retinoblastoma-like protein 1 (1068 aa).

Threonine 332 is modified (phosphothreonine; by CDK2). Threonine 369 carries the post-translational modification Phosphothreonine; by CDK4. Threonine 385 bears the Phosphothreonine; by CDK2 mark. Positions threonine 385–lysine 584 are domain A. The tract at residues threonine 385–tyrosine 949 is pocket; binds T and E1A. The spacer stretch occupies residues valine 585–asparagine 780. Phosphoserine; by CDK2 and CDK4 is present on serine 640. Phosphoserine is present on residues serine 650 and serine 749. Phosphoserine; by CDK2 is present on serine 762. A domain B region spans residues arginine 781 to tyrosine 949. Phosphoserine; by CDK2 and CDK4 occurs at positions 964 and 975. Position 988 is a phosphoserine; by CDK2 (serine 988). Position 997 is a phosphothreonine; by CDK2 (threonine 997). Serine 1009 carries the post-translational modification Phosphoserine; by CDK2. Serine 1041 carries the post-translational modification Phosphoserine.

Belongs to the retinoblastoma protein (RB) family. Component of the DREAM complex (also named LINC complex) at least composed of E2F4, E2F5, LIN9, LIN37, LIN52, LIN54, MYBL1, MYBL2, RBL1, RBL2, RBBP4, TFDP1 and TFDP2. The complex exists in quiescent cells where it represses cell cycle-dependent genes. It dissociates in S phase when LIN9, LIN37, LIN52 and LIN54 form a subcomplex that binds to MYBL2. Interacts with AATF. Interacts with KDM5A. Interacts with KMT5B and KMT5C. Interacts with USP4. Interacts with RBBP9. As to quaternary structure, (Microbial infection) Interacts with SV40 and JC virus large T antigens. Large T antigen, but not E1A, binds only to the unphosphorylated form. In terms of assembly, (Microbial infection) Interacts with JC virus small t antigen. Cell-cycle arrest properties are inactivated by phosphorylation on Thr-332, Ser-640, Ser-964 and Ser-975 by CDK4.

The protein resides in the nucleus. In terms of biological role, key regulator of entry into cell division. Directly involved in heterochromatin formation by maintaining overall chromatin structure and, in particular, that of constitutive heterochromatin by stabilizing histone methylation. Recruits and targets histone methyltransferases KMT5B and KMT5C, leading to epigenetic transcriptional repression. Controls histone H4 'Lys-20' trimethylation. Probably acts as a transcription repressor by recruiting chromatin-modifying enzymes to promoters. Potent inhibitor of E2F-mediated trans-activation. May act as a tumor suppressor. This is Retinoblastoma-like protein 1 (RBL1) from Homo sapiens (Human).